A 297-amino-acid chain; its full sequence is Glucose-6-phosphate 1-epimerase (297 aa).

3 residues coordinate substrate: Arg-57, Gln-81, and Arg-86. Ser-88 carries the post-translational modification Phosphoserine. Residue His-159 is part of the active site. Asp-203 contacts substrate. The active site involves Glu-264.

It belongs to the glucose-6-phosphate 1-epimerase family.

The catalysed reaction is alpha-D-glucose 6-phosphate = beta-D-glucose 6-phosphate. Functionally, catalyzes the interconversion between the alpha and beta anomers from at least three hexose 6-phosphate sugars (Glc6P, Gal6P, and Man6P). The chain is Glucose-6-phosphate 1-epimerase from Saccharomyces cerevisiae (strain ATCC 204508 / S288c) (Baker's yeast).